The primary structure comprises 864 residues: Structure-specific endonuclease subunit SLX4 (864 aa).

Positions 35–54 (SPLSLPSPTSLLDFLSTSTS) are enriched in low complexity. Disordered stretches follow at residues 35 to 72 (SPLSLPSPTSLLDFLSTSTSRGPARSDTDGDKTQGKEV), 89 to 113 (VVSGTGGKAATGKKLKRRTESPGNA), 160 to 193 (KANQTVSLQPETKKSAPKGCNDTTQPAENGHIND), 288 to 318 (GLSDSRQSSITEDSESATSKPRRVKAKNPPK), 348 to 382 (LSDEPGKEKNVAKRTSGARYAKPGRKKSATTEKKN), 413 to 432 (ANGHSEDQHEQNEGTSHISN), and 625 to 771 (KTSN…ETLP). A compositionally biased stretch (basic and acidic residues) spans 58–72 (ARSDTDGDKTQGKEV). 2 stretches are compositionally biased toward polar residues: residues 160–169 (KANQTVSLQP) and 289–306 (LSDSRQSSITEDSESATS). Residues 307-317 (KPRRVKAKNPP) show a composition bias toward basic residues. Polar residues predominate over residues 659–668 (SIPQTATTQV). Positions 683–695 (VPVPSRRSTSTSK) are enriched in low complexity. Polar residues predominate over residues 743–771 (PESFNLPTTPLTIRSGKIPSTGTASETLP).

The protein belongs to the SLX4 family. In terms of assembly, forms a heterodimer with SLX1. In terms of processing, phosphorylated in response to DNA damage.

The protein localises to the nucleus. In terms of biological role, regulatory subunit of the SLX1-SLX4 structure-specific endonuclease that resolves DNA secondary structures generated during DNA repair and recombination. Has endonuclease activity towards branched DNA substrates, introducing single-strand cuts in duplex DNA close to junctions with ss-DNA. This Paracoccidioides brasiliensis (strain Pb03) protein is Structure-specific endonuclease subunit SLX4.